Consider the following 396-residue polypeptide: NADH-quinone oxidoreductase subunit D 1 (396 aa).

The protein belongs to the complex I 49 kDa subunit family. In terms of assembly, NDH-1 is composed of 14 different subunits. Subunits NuoB, C, D, E, F, and G constitute the peripheral sector of the complex.

It localises to the cell inner membrane. It carries out the reaction a quinone + NADH + 5 H(+)(in) = a quinol + NAD(+) + 4 H(+)(out). NDH-1 shuttles electrons from NADH, via FMN and iron-sulfur (Fe-S) centers, to quinones in the respiratory chain. The immediate electron acceptor for the enzyme in this species is believed to be ubiquinone. Couples the redox reaction to proton translocation (for every two electrons transferred, four hydrogen ions are translocated across the cytoplasmic membrane), and thus conserves the redox energy in a proton gradient. The chain is NADH-quinone oxidoreductase subunit D 1 from Rhizobium etli (strain CIAT 652).